Consider the following 931-residue polypeptide: Protein unc-45 homolog B (931 aa).

TPR repeat units lie at residues 6–39 (AAQLKEEGNRHFQLQDYKAATKSYSQALKLTKDK), 43–76 (ATLYRNRAACGLKMESYAQAASDASRAIDINSAD), and 77–110 (IKALYRRCQALEHLGKLDQAFKDVQRCATLEPRN). 3 ARM repeats span residues 169–208 (EAGAERIFQSNGVALLLQLMNTQRPELLLAAVRTLSGMCS), 211–250 (RARATAILHAVRIDRICSLMALENEEMSLAVCNLLQAIID), and 751–790 (DKLRQKIFKEKALPDIENYMFENHDQLRQAATECMCNMVL).

As to quaternary structure, interacts with HSP90 in an ATP-independent manner. Interacts with UBE4B; the interaction may target UNC45B for proteasomal degradation. In terms of tissue distribution, highly expressed in adult skeletal muscle and heart. Detected at intermediate levels in lung. Highly expressed in embryonic heart.

The protein resides in the cytoplasm. The protein localises to the myofibril. Its subcellular location is the sarcomere. It is found in the z line. It localises to the a band. The protein resides in the perinuclear region. The protein localises to the cytosol. Functionally, acts as a co-chaperone for HSP90 and is required for proper folding of the myosin motor domain. Plays a role in sarcomere formation during muscle cell development. Is necessary for normal early lens development. The sequence is that of Protein unc-45 homolog B (Unc45b) from Mus musculus (Mouse).